The chain runs to 93 residues: Putative sodium channel toxin Ts41 (93 aa).

Positions Met1–Ser23 are cleaved as a signal peptide. 4 disulfides stabilise this stretch: Cys22-Cys87, Cys39-Cys62, Cys48-Cys67, and Cys52-Cys69. The LCN-type CS-alpha/beta domain maps to Glu26–Lys88.

It belongs to the long (4 C-C) scorpion toxin superfamily. In terms of tissue distribution, expressed by the venom gland.

Its subcellular location is the secreted. The edited BmKBTx-like may modulate voltage-gated sodium channels (Nav). Functionally, the non-edited form is able to form a heterodimer. In orthologs, a heterodimer with LVP beta-chain induces lipolysis in rat adipocytes, which is mediated through the beta-2 adrenergic receptor pathway (ADRB2). Since no LVP beta-chains have been identified in the venom of this scorpion, it is possible that this protein is not involved in a lipolysis process. The sequence is that of Putative sodium channel toxin Ts41 from Tityus serrulatus (Brazilian scorpion).